The following is a 458-amino-acid chain: Biphenyl dioxygenase subunit alpha (458 aa).

One can recognise a Rieske domain in the interval 58 to 156 (WLLLGHESHV…KEGDCGFDKA (99 aa)). 4 residues coordinate [2Fe-2S] cluster: Cys100, His102, Cys120, and His123. Fe cation-binding residues include His233 and His239.

The protein belongs to the bacterial ring-hydroxylating dioxygenase alpha subunit family. Heterohexamer consisting of three BphA subunits and three BphE subunits. A ferredoxin (BphF) and a ferredoxin reductase (BphG) must be present to obtain activity. It depends on [2Fe-2S] cluster as a cofactor. Fe cation is required as a cofactor.

The catalysed reaction is biphenyl + NADH + O2 + H(+) = (2R,3S)-3-phenylcyclohexa-3,5-diene-1,2-diol + NAD(+). It participates in xenobiotic degradation; biphenyl degradation; 2-hydroxy-2,4-pentadienoate and benzoate from biphenyl: step 1/4. The chain is Biphenyl dioxygenase subunit alpha (bphA) from Metapseudomonas furukawaii (Pseudomonas furukawaii).